A 362-amino-acid chain; its full sequence is UDP-N-acetylglucosamine--N-acetylmuramyl-(pentapeptide) pyrophosphoryl-undecaprenol N-acetylglucosamine transferase (362 aa).

UDP-N-acetyl-alpha-D-glucosamine is bound by residues 15 to 17 (TGG), asparagine 127, arginine 165, serine 191, isoleucine 247, 266 to 271 (ALTVSE), and glutamine 292.

Belongs to the glycosyltransferase 28 family. MurG subfamily.

The protein localises to the cell inner membrane. The catalysed reaction is di-trans,octa-cis-undecaprenyl diphospho-N-acetyl-alpha-D-muramoyl-L-alanyl-D-glutamyl-meso-2,6-diaminopimeloyl-D-alanyl-D-alanine + UDP-N-acetyl-alpha-D-glucosamine = di-trans,octa-cis-undecaprenyl diphospho-[N-acetyl-alpha-D-glucosaminyl-(1-&gt;4)]-N-acetyl-alpha-D-muramoyl-L-alanyl-D-glutamyl-meso-2,6-diaminopimeloyl-D-alanyl-D-alanine + UDP + H(+). It participates in cell wall biogenesis; peptidoglycan biosynthesis. Cell wall formation. Catalyzes the transfer of a GlcNAc subunit on undecaprenyl-pyrophosphoryl-MurNAc-pentapeptide (lipid intermediate I) to form undecaprenyl-pyrophosphoryl-MurNAc-(pentapeptide)GlcNAc (lipid intermediate II). This Shewanella baltica (strain OS223) protein is UDP-N-acetylglucosamine--N-acetylmuramyl-(pentapeptide) pyrophosphoryl-undecaprenol N-acetylglucosamine transferase.